The chain runs to 398 residues: Serpin-Z2B (398 aa).

Positions 343 to 367 (GTEAAATTIAKVVLRQAPPPSVLDF) are RCL.

The protein belongs to the serpin family.

Its function is as follows. Inhibits chymotrypsin, cathepsin G and trypsin in vitro. In Triticum aestivum (Wheat), this protein is Serpin-Z2B.